The primary structure comprises 589 residues: Muscarinic acetylcholine receptor M3 (589 aa).

At 1 to 66 (MTLHSNSTTS…DPLGGHTIWQ (66 aa)) the chain is on the extracellular side. N-linked (GlcNAc...) asparagine glycosylation is found at Asn-6, Asn-15, Asn-41, Asn-48, and Asn-52. Residues 67–90 (VVFIAFLTGFLALVTIIGNILVIV) traverse the membrane as a helical segment. Topologically, residues 91-103 (AFKVNKQLKTVNN) are cytoplasmic. The helical transmembrane segment at 104-129 (YFLLSLACADLIIGVISMNLFTTYII) threads the bilayer. Residues 130 to 141 (MNRWALGNLACD) lie on the Extracellular side of the membrane. Cysteines 140 and 220 form a disulfide. The chain crosses the membrane as a helical span at residues 142-163 (LWLSIDYVASNASVMNLLVISF). Residues 164 to 183 (DRYFSITRPLTYRAKRTTKR) are Cytoplasmic-facing. The helical transmembrane segment at 184–205 (AGVMIGLAWVISFVLWAPAILF) threads the bilayer. Residues 206–228 (WQYFVGKRTVPPGECFIQFLSEP) lie on the Extracellular side of the membrane. A helical membrane pass occupies residues 229–251 (TITFGTAIAAFYMPVTIMTILYW). At 252 to 490 (RIYKETEKRT…SLIKEKKAAQ (239 aa)) the chain is on the cytoplasmic side. The short motif at 274–280 (AEAENFV) is the Basolateral sorting signal element. The segment at 323–356 (AEQMDQDHSSSDSWNNNDAAASLENSASSDEEDI) is disordered. Over residues 333–344 (SDSWNNNDAAAS) the composition is skewed to low complexity. Ser-384 carries the post-translational modification Phosphoserine. A helical transmembrane segment spans residues 491–513 (TLSAILLAFIITWTPYNIMVLVN). Over 514 to 525 (TFCDSCIPKTYW) the chain is Extracellular. Cys-516 and Cys-519 form a disulfide bridge. The helical transmembrane segment at 526-545 (NLGYWLCYINSTVNPVCYAL) threads the bilayer. Residues 546–589 (CNKTFRTTFKTLLLCQCDKRKRRKQQYQQRQSVIFHKRVPEQAL) lie on the Cytoplasmic side of the membrane.

Belongs to the G-protein coupled receptor 1 family. Muscarinic acetylcholine receptor subfamily. CHRM3 sub-subfamily. As to quaternary structure, homodimer; the dimers can form tetramers. Interacts with NALCN. Interacts with TMEM147.

The protein resides in the cell membrane. It localises to the postsynaptic cell membrane. Its subcellular location is the basolateral cell membrane. The protein localises to the endoplasmic reticulum membrane. In terms of biological role, the muscarinic acetylcholine receptor mediates various cellular responses, including inhibition of adenylate cyclase, breakdown of phosphoinositides and modulation of potassium channels through the action of G proteins. Primary transducing effect is Pi turnover. The chain is Muscarinic acetylcholine receptor M3 (Chrm3) from Rattus norvegicus (Rat).